A 312-amino-acid polypeptide reads, in one-letter code: Protoheme IX farnesyltransferase (312 aa).

A run of 8 helical transmembrane segments spans residues V31 to H51, P52 to L72, I119 to I139, I152 to G172, I179 to F199, I225 to F245, V247 to V267, and I288 to L308.

The protein belongs to the UbiA prenyltransferase family. Protoheme IX farnesyltransferase subfamily.

The protein localises to the cell inner membrane. It carries out the reaction heme b + (2E,6E)-farnesyl diphosphate + H2O = Fe(II)-heme o + diphosphate. Its pathway is porphyrin-containing compound metabolism; heme O biosynthesis; heme O from protoheme: step 1/1. In terms of biological role, converts heme B (protoheme IX) to heme O by substitution of the vinyl group on carbon 2 of heme B porphyrin ring with a hydroxyethyl farnesyl side group. This chain is Protoheme IX farnesyltransferase, found in Rhodopseudomonas palustris (strain ATCC BAA-98 / CGA009).